Reading from the N-terminus, the 626-residue chain is UPF0313 protein MM_1287 (626 aa).

The disordered stretch occupies residues 206-227; the sequence is GKGKEKAGEQDESENATEEVAK. The Radical SAM core domain occupies 320-589; the sequence is ALEMVKFSLT…AMQRALMHYR (270 aa). The [4Fe-4S] cluster site is built by Cys334, Cys338, and Cys341.

Belongs to the UPF0313 family. [4Fe-4S] cluster serves as cofactor.

The sequence is that of UPF0313 protein MM_1287 from Methanosarcina mazei (strain ATCC BAA-159 / DSM 3647 / Goe1 / Go1 / JCM 11833 / OCM 88) (Methanosarcina frisia).